A 293-amino-acid polypeptide reads, in one-letter code: 4-hydroxy-tetrahydrodipicolinate synthase (293 aa).

Position 47 (Thr-47) interacts with pyruvate. Tyr-135 serves as the catalytic Proton donor/acceptor. Lys-163 (schiff-base intermediate with substrate) is an active-site residue. Residue Val-205 participates in pyruvate binding.

This sequence belongs to the DapA family. In terms of assembly, homotetramer; dimer of dimers.

It localises to the cytoplasm. The catalysed reaction is L-aspartate 4-semialdehyde + pyruvate = (2S,4S)-4-hydroxy-2,3,4,5-tetrahydrodipicolinate + H2O + H(+). It participates in amino-acid biosynthesis; L-lysine biosynthesis via DAP pathway; (S)-tetrahydrodipicolinate from L-aspartate: step 3/4. In terms of biological role, catalyzes the condensation of (S)-aspartate-beta-semialdehyde [(S)-ASA] and pyruvate to 4-hydroxy-tetrahydrodipicolinate (HTPA). This Methylibium petroleiphilum (strain ATCC BAA-1232 / LMG 22953 / PM1) protein is 4-hydroxy-tetrahydrodipicolinate synthase.